A 107-amino-acid chain; its full sequence is Death-associated protein-like 1 (107 aa).

Residues 1 to 26 (MANEVQVQLSPLKGGHPPAVKAGGKR) are disordered.

Detected in the corneal epithelium, and only in trace amounts in the liver, bladder, brain, heart, and stomach.

May play a role in the early stages of epithelial differentiation or in apoptosis. This is Death-associated protein-like 1 (DAPL1) from Bos taurus (Bovine).